A 183-amino-acid polypeptide reads, in one-letter code: Peptide deformylase (183 aa).

Residues Cys-111 and His-154 each contribute to the Fe cation site. Glu-155 is an active-site residue. Fe cation is bound at residue His-158.

This sequence belongs to the polypeptide deformylase family. Fe(2+) serves as cofactor.

It carries out the reaction N-terminal N-formyl-L-methionyl-[peptide] + H2O = N-terminal L-methionyl-[peptide] + formate. Its function is as follows. Removes the formyl group from the N-terminal Met of newly synthesized proteins. Requires at least a dipeptide for an efficient rate of reaction. N-terminal L-methionine is a prerequisite for activity but the enzyme has broad specificity at other positions. The chain is Peptide deformylase from Staphylococcus epidermidis (strain ATCC 35984 / DSM 28319 / BCRC 17069 / CCUG 31568 / BM 3577 / RP62A).